The chain runs to 184 residues: Photosystem I assembly protein Ycf4 (184 aa).

2 helical membrane-spanning segments follow: residues Gly-20–Ile-40 and Ile-64–Ile-84.

This sequence belongs to the Ycf4 family.

Its subcellular location is the plastid. It is found in the chloroplast thylakoid membrane. Seems to be required for the assembly of the photosystem I complex. The protein is Photosystem I assembly protein Ycf4 of Citrus sinensis (Sweet orange).